Reading from the N-terminus, the 230-residue chain is GTP cyclohydrolase III (230 aa).

Belongs to the archaeal-type GTP cyclohydrolase family.

It carries out the reaction GTP + 3 H2O = 2-amino-5-formylamino-6-(5-phospho-D-ribosylamino)pyrimidin-4(3H)-one + 2 phosphate + 2 H(+). Its function is as follows. Catalyzes the formation of 2-amino-5-formylamino-6-ribofuranosylamino-4(3H)-pyrimidinone ribonucleotide monophosphate and inorganic phosphate from GTP. Also has an independent pyrophosphate phosphohydrolase activity. The polypeptide is GTP cyclohydrolase III (Saccharolobus islandicus (strain M.16.27) (Sulfolobus islandicus)).